Here is a 326-residue protein sequence, read N- to C-terminus: Transposase InsH for insertion sequence element IS5H (326 aa).

It belongs to the transposase 11 family.

Its function is as follows. Involved in the transposition of the insertion sequence IS5. This is Transposase InsH for insertion sequence element IS5H (insH6) from Escherichia coli (strain K12).